Reading from the N-terminus, the 379-residue chain is Cathepsin B-like protease 1 (379 aa).

The first 30 residues, Met1–Ala30, serve as a signal peptide directing secretion. A propeptide spans Glu31 to Lys102 (activation peptide). Residues Asn32 and Asn69 are each glycosylated (N-linked (GlcNAc...) asparagine). Cystine bridges form between Cys116-Cys165, Cys148-Cys191, Cys182-Cys236, Cys183-Cys187, Cys213-Cys240, and Cys222-Cys227. The active site involves Cys151. Residue Asn171 is glycosylated (N-linked (GlcNAc...) asparagine). Residues His306 and Asn327 contribute to the active site. N-linked (GlcNAc...) asparagine glycosylation occurs at Asn330. A propeptide spans Asn363–Val379 (removed in mature form).

Belongs to the peptidase C1 family.

Thiol protease that plays a central role in plant programmed cell death (PCD). In addition to its role in protein degradation, may cleave and/or degrade a number of target proteins, activating signaling towards PCD. Contributes to the increase of caspase-3-like activity after UV-C-induced PCD and is required for abiotic stress-induced PCD. Functions redundantly with CATHB2 and CATHB3 in basal defense and distinct forms of plant programmed cell death (PCD). Participates in the establishment of basal resistance against the bacterial pathogen Pseudomonase syringae pv. tomato DC3000. Required for full levels of PCD during resistance (R) gene-mediated hypersensitive response (HR). Involved in the regulation of senescence, a developmental form of PCD in plants. The chain is Cathepsin B-like protease 1 from Arabidopsis thaliana (Mouse-ear cress).